The sequence spans 200 residues: Recombination protein RecR (200 aa).

Residues 60 to 75 (CVYCQALTEDDVCNIC) form a C4-type zinc finger. In terms of domain architecture, Toprim spans 83–177 (TKLCIIESML…KISRIGFGVP (95 aa)).

Belongs to the RecR family.

In terms of biological role, may play a role in DNA repair. It seems to be involved in an RecBC-independent recombinational process of DNA repair. It may act with RecF and RecO. This chain is Recombination protein RecR, found in Francisella tularensis subsp. mediasiatica (strain FSC147).